The primary structure comprises 1222 residues: Kinesin-related protein 9 (1222 aa).

The span at 1–25 (MDNNNNNFSTPKQPTINSTTGGQLR) shows a compositional bias: polar residues. 3 disordered regions span residues 1 to 55 (MDNN…ITNS), 75 to 165 (MDSL…STNI), and 188 to 343 (SSNT…TQPL). Residues 26–55 (SRSNSSPSTSSISTPRNGSTTATTSSITNS) are compositionally biased toward low complexity. Positions 75–85 (MDSLSTPMSQS) are enriched in polar residues. Low complexity-rich tracts occupy residues 122–165 (SFIS…STNI), 194–209 (SSLP…PLSN), 216–238 (NHHL…ISTT), and 254–325 (NLTT…RTPI). Positions 326-343 (QNFNSVGGVNITSKTQPL) are enriched in polar residues. A Kinesin motor domain is found at 350 to 719 (SIQAVCRFRP…LNFGQRAQSV (370 aa)). 438–445 (GQTGAGKT) contributes to the ATP binding site. Residues 724-1026 (LQNVEESHSE…DTLTNKLEIQ (303 aa)) adopt a coiled-coil conformation. The tract at residues 1144 to 1174 (NINNNNNIKNNNNNNKLKSKKVGSSSSSSSN) is disordered. A helical transmembrane segment spans residues 1183–1203 (ILFFLIILVILFFLMVAVGLT).

It belongs to the TRAFAC class myosin-kinesin ATPase superfamily. Kinesin family.

Its subcellular location is the membrane. The protein localises to the cytoplasm. The protein resides in the cytoskeleton. In terms of biological role, microtubule-associated force-producing protein that plays a role in organelle transport. Its motor activity is directed toward the microtubule's plus end. This is Kinesin-related protein 9 (kif9) from Dictyostelium discoideum (Social amoeba).